The primary structure comprises 491 residues: Cytochrome P450 2B3 (491 aa).

Heme is bound at residue Cys-436.

The protein belongs to the cytochrome P450 family. The cofactor is heme. As to expression, liver. Not found in the lung, kidney and prostate.

The protein localises to the endoplasmic reticulum membrane. It is found in the microsome membrane. The enzyme catalyses an organic molecule + reduced [NADPH--hemoprotein reductase] + O2 = an alcohol + oxidized [NADPH--hemoprotein reductase] + H2O + H(+). Its function is as follows. Cytochromes P450 are a group of heme-thiolate monooxygenases. In liver microsomes, this enzyme is involved in an NADPH-dependent electron transport pathway. It oxidizes a variety of structurally unrelated compounds, including steroids, fatty acids, and xenobiotics. The polypeptide is Cytochrome P450 2B3 (Cyp2b3) (Rattus norvegicus (Rat)).